We begin with the raw amino-acid sequence, 137 residues long: CUB domain-containing protein (137 aa).

A signal peptide spans 1-21 (MRLSRAFAWPLLCSIATTVKA). 2 cysteine pairs are disulfide-bonded: C30–C51 and C75–C96. Positions 30-132 (CGGHYTDEYG…TFFEIYYFVD (103 aa)) constitute a CUB domain.

The polypeptide is CUB domain-containing protein (Homo sapiens (Human)).